A 382-amino-acid polypeptide reads, in one-letter code: 1-deoxy-D-xylulose 5-phosphate reductoisomerase (382 aa).

T10, G11, S12, I13, G36, and N122 together coordinate NADPH. K123 provides a ligand contact to 1-deoxy-D-xylulose 5-phosphate. E124 is an NADPH binding site. D148 is a Mn(2+) binding site. Positions 149, 150, 174, and 197 each coordinate 1-deoxy-D-xylulose 5-phosphate. Mn(2+) is bound at residue E150. Position 203 (G203) interacts with NADPH. S210, N215, K216, and E219 together coordinate 1-deoxy-D-xylulose 5-phosphate. Mn(2+) is bound at residue E219.

It belongs to the DXR family. Mg(2+) serves as cofactor. Requires Mn(2+) as cofactor.

It carries out the reaction 2-C-methyl-D-erythritol 4-phosphate + NADP(+) = 1-deoxy-D-xylulose 5-phosphate + NADPH + H(+). The protein operates within isoprenoid biosynthesis; isopentenyl diphosphate biosynthesis via DXP pathway; isopentenyl diphosphate from 1-deoxy-D-xylulose 5-phosphate: step 1/6. Catalyzes the NADPH-dependent rearrangement and reduction of 1-deoxy-D-xylulose-5-phosphate (DXP) to 2-C-methyl-D-erythritol 4-phosphate (MEP). In Chlorobium chlorochromatii (strain CaD3), this protein is 1-deoxy-D-xylulose 5-phosphate reductoisomerase.